The sequence spans 461 residues: Protein KlcB (461 aa).

2 disordered regions span residues 84–107 (PEAT…TEDK) and 349–379 (RAKA…EDAP). Basic residues predominate over residues 91-101 (ARRRTKARKSK). Basic and acidic residues predominate over residues 357–377 (GQRREPVTPAKPEPEPAKDED).

This is Protein KlcB (klcB) from Escherichia coli.